The following is a 36-amino-acid chain: Toxin Iob1 (36 aa).

3 disulfides stabilise this stretch: cysteine 6/cysteine 21, cysteine 13/cysteine 26, and cysteine 20/cysteine 33.

Its subcellular location is the secreted. Functionally, binds reversibly and blocks N-type voltage-gated calcium channels (Cav). The protein is Toxin Iob1 of Isyndus obscurus (Assassin bug).